A 1375-amino-acid chain; its full sequence is DNA-directed RNA polymerase subunit beta (1375 aa).

It belongs to the RNA polymerase beta chain family. In terms of assembly, the RNAP catalytic core consists of 2 alpha, 1 beta, 1 beta' and 1 omega subunit. When a sigma factor is associated with the core the holoenzyme is formed, which can initiate transcription.

The catalysed reaction is RNA(n) + a ribonucleoside 5'-triphosphate = RNA(n+1) + diphosphate. Functionally, DNA-dependent RNA polymerase catalyzes the transcription of DNA into RNA using the four ribonucleoside triphosphates as substrates. The sequence is that of DNA-directed RNA polymerase subunit beta from Oleidesulfovibrio alaskensis (strain ATCC BAA-1058 / DSM 17464 / G20) (Desulfovibrio alaskensis).